The primary structure comprises 83 residues: Tetracenomycin polyketide synthase acyl carrier protein (83 aa).

Residues 3-83 (QIGLPRLVEI…VNTETAGEVA (81 aa)) enclose the Carrier domain. Serine 41 carries the O-(pantetheine 4'-phosphoryl)serine modification.

The tetracenomycin polyketide synthase (TCM PKS) is composed of a ketosynthase complex (TcmKL), an acyl carrier protein (TcmM), a cyclase (TcmN) and a probable second cyclase (TcmJ). Pantetheine 4'-phosphate is required as a cofactor. In terms of processing, 4'-phosphopantetheine is transferred from CoA to a specific serine of apo-ACP.

The enzyme catalyses 10 malonyl-CoA + 8 H(+) = tetracenomycin F2 + 10 CO2 + 10 CoA + 2 H2O. The protein operates within antibiotic biosynthesis; tetracenomycin C biosynthesis. Involved in the biosynthesis of tetracenomycin C (TCM C). Part of a type II polyketide synthase (PKS) that catalyzes the synthesis of tetracenomycin F2 (TCM F2), a precursor of TCM C, from malonyl-CoA. TcmM is an acyl carrier protein that serves as an acceptor of malonate from malonyl-CoA and acts as the tether for the substrates and intermediates of polyketide assembly. The malonyl CoA-acyl carrier protein transacylase FabD (MCT) is required to catalyze the transacylation between malonyl-CoA and TcmM, although a relatively slow spontaneous self-malonylation of TcmM also occurs in a reaction without the MCT. In Streptomyces glaucescens, this protein is Tetracenomycin polyketide synthase acyl carrier protein.